We begin with the raw amino-acid sequence, 404 residues long: Cysteine desulfurase IscS (404 aa).

Pyridoxal 5'-phosphate contacts are provided by residues 75-76 (AT), Asn-155, Gln-183, and 203-205 (SAH). At Lys-206 the chain carries N6-(pyridoxal phosphate)lysine. Position 243 (Thr-243) interacts with pyridoxal 5'-phosphate. Residue Cys-328 is the Cysteine persulfide intermediate of the active site. Residue Cys-328 participates in [2Fe-2S] cluster binding.

The protein belongs to the class-V pyridoxal-phosphate-dependent aminotransferase family. NifS/IscS subfamily. Homodimer. Forms a heterotetramer with IscU, interacts with other sulfur acceptors. Pyridoxal 5'-phosphate is required as a cofactor.

Its subcellular location is the cytoplasm. It carries out the reaction (sulfur carrier)-H + L-cysteine = (sulfur carrier)-SH + L-alanine. It functions in the pathway cofactor biosynthesis; iron-sulfur cluster biosynthesis. Its function is as follows. Master enzyme that delivers sulfur to a number of partners involved in Fe-S cluster assembly, tRNA modification or cofactor biosynthesis. Catalyzes the removal of elemental sulfur atoms from cysteine to produce alanine. Functions as a sulfur delivery protein for Fe-S cluster synthesis onto IscU, an Fe-S scaffold assembly protein, as well as other S acceptor proteins. This Vibrio campbellii (strain ATCC BAA-1116) protein is Cysteine desulfurase IscS.